The primary structure comprises 762 residues: Probable inorganic carbon transporter subunit DabA (762 aa).

Positions 279, 281, 461, and 476 each coordinate Zn(2+).

It belongs to the inorganic carbon transporter (TC 9.A.2) DabA family. As to quaternary structure, forms a complex with DabB. Zn(2+) is required as a cofactor.

The protein resides in the cell inner membrane. Its function is as follows. Part of an energy-coupled inorganic carbon pump. The protein is Probable inorganic carbon transporter subunit DabA of Legionella pneumophila (strain Lens).